We begin with the raw amino-acid sequence, 297 residues long: F-actin-capping protein subunit beta (297 aa).

The span at 276–289 shows a compositional bias: basic and acidic residues; the sequence is DLSGKESDDKRQSE. Residues 276-297 form a disordered region; the sequence is DLSGKESDDKRQSELVKGLQSL.

The protein belongs to the F-actin-capping protein beta subunit family. In terms of assembly, component of the F-actin capping complex, composed of a heterodimer of an alpha and a beta subunit.

It localises to the cytoplasm. Its subcellular location is the cytoskeleton. The protein resides in the actin patch. Its function is as follows. F-actin-capping proteins bind in a Ca(2+)-independent manner to the fast growing ends of actin filaments (barbed end) thereby blocking the exchange of subunits at these ends. Unlike other capping proteins (such as gelsolin and severin), these proteins do not sever actin filaments. This Debaryomyces hansenii (strain ATCC 36239 / CBS 767 / BCRC 21394 / JCM 1990 / NBRC 0083 / IGC 2968) (Yeast) protein is F-actin-capping protein subunit beta (CAP2).